The sequence spans 444 residues: C4-dicarboxylate transport protein (444 aa).

A run of 8 helical transmembrane segments spans residues 7–29 (LYKS…GHFY), 44–66 (IKLI…IAGM), 79–101 (ALLY…VNVV), 143–165 (IVGA…FGFA), 186–208 (VMFN…AMAF), 221–243 (LGQL…LGAI), 291–313 (VVGL…YLTM), and 353–375 (FIVL…ALIL). The segment at 418 to 444 (SGGRAISDTREEDDLGVAEGPTPTTVK) is disordered.

It belongs to the dicarboxylate/amino acid:cation symporter (DAACS) (TC 2.A.23) family.

The protein localises to the cell inner membrane. Functionally, responsible for the transport of dicarboxylates such as succinate, fumarate, and malate from the periplasm across the inner membrane. The chain is C4-dicarboxylate transport protein from Pseudomonas chlororaphis (Pseudomonas aureofaciens).